A 151-amino-acid polypeptide reads, in one-letter code: Acidic phospholipase A2 1 (151 aa).

Residues 1–21 form the signal peptide; that stretch reads MNPAHLLVLSAVCVSLLGASS. Residues 22–27 constitute a propeptide that is removed on maturation; the sequence is IPPQPL. 7 disulfides stabilise this stretch: C38-C104, C54-C151, C56-C72, C71-C132, C78-C125, C88-C118, and C111-C123. Ca(2+)-binding residues include Y55, G57, and G59. Residue H75 is part of the active site. A Ca(2+)-binding site is contributed by D76. Residue D126 is part of the active site.

The cofactor is Ca(2+). As to expression, expressed by the venom gland.

Its subcellular location is the secreted. The catalysed reaction is a 1,2-diacyl-sn-glycero-3-phosphocholine + H2O = a 1-acyl-sn-glycero-3-phosphocholine + a fatty acid + H(+). In terms of biological role, snake venom phospholipase A2 (PLA2) that may exhibit cardiotoxicity, myotoxicity, antiplatelet activity, and edema-inducing activity. PLA2 catalyzes the calcium-dependent hydrolysis of the 2-acyl groups in 3-sn-phosphoglycerides. The polypeptide is Acidic phospholipase A2 1 (Ophiophagus hannah (King cobra)).